The following is a 737-amino-acid chain: Photosystem I P700 chlorophyll a apoprotein A2 (737 aa).

8 helical membrane-spanning segments follow: residues 46-69, 135-158, 175-199, 273-291, 333-356, 372-398, 420-442, and 520-538; these read LFST…FHIA, LYQG…LHLQ, LNHH…HVAI, IAHH…GHMY, LHFQ…QHMY, AALY…IFFI, AIIS…LYVH, and FLVH…LILV. C562 and C571 together coordinate [4Fe-4S] cluster. 2 consecutive transmembrane segments (helical) span residues 578-599 and 646-668; these read AFYL…YWHW and LAVW…MFLI. Positions 657, 665, and 673 each coordinate chlorophyll a. A phylloquinone-binding site is contributed by W674. The chain crosses the membrane as a helical span at residues 710–730; sequence VVGLAHFSVGYVLTYAAFLIA.

This sequence belongs to the PsaA/PsaB family. As to quaternary structure, the PsaA/B heterodimer binds the P700 chlorophyll special pair and subsequent electron acceptors. PSI consists of a core antenna complex that captures photons, and an electron transfer chain that converts photonic excitation into a charge separation. The cyanobacterial PSI reaction center is composed of one copy each of PsaA,B,C,D,E,F,I,J,K,L,M and X, and forms trimeric complexes. It depends on PSI electron transfer chain: 5 chlorophyll a, 1 chlorophyll a', 2 phylloquinones and 3 4Fe-4S clusters. PSI core antenna: 90 chlorophyll a, 22 carotenoids, 3 phospholipids and 1 galactolipid. P700 is a chlorophyll a/chlorophyll a' dimer, A0 is one or more chlorophyll a, A1 is one or both phylloquinones and FX is a shared 4Fe-4S iron-sulfur center. as a cofactor.

Its subcellular location is the cellular thylakoid membrane. The catalysed reaction is reduced [plastocyanin] + hnu + oxidized [2Fe-2S]-[ferredoxin] = oxidized [plastocyanin] + reduced [2Fe-2S]-[ferredoxin]. PsaA and PsaB bind P700, the primary electron donor of photosystem I (PSI), as well as the electron acceptors A0, A1 and FX. PSI is a plastocyanin/cytochrome c6-ferredoxin oxidoreductase, converting photonic excitation into a charge separation, which transfers an electron from the donor P700 chlorophyll pair to the spectroscopically characterized acceptors A0, A1, FX, FA and FB in turn. Oxidized P700 is reduced on the lumenal side of the thylakoid membrane by plastocyanin or cytochrome c6. In Parasynechococcus marenigrum (strain WH8102), this protein is Photosystem I P700 chlorophyll a apoprotein A2.